The chain runs to 158 residues: Transcription factor BTF3 homolog 4 (158 aa).

Lys5 bears the N6-methyllysine mark. The NAC-A/B domain maps to 33-98; that stretch reads TADDKKLQSS…AEAKPITEML (66 aa). Thr111 is subject to Phosphothreonine. Positions 123–158 are disordered; it reads QVLDSKTPKPEDIDEEEDDVPDLVENFDEASKNEAN. Acidic residues predominate over residues 134 to 150; sequence DIDEEEDDVPDLVENFD.

It belongs to the NAC-beta family.

The protein is Transcription factor BTF3 homolog 4 (BTF3L4) of Bos taurus (Bovine).